The chain runs to 187 residues: Orotate phosphoribosyltransferase (187 aa).

5-phospho-alpha-D-ribose 1-diphosphate-binding positions include R98, K99, K102, H104, and 128–136 (EDVTTTGGS). Residues T132 and R160 each contribute to the orotate site.

The protein belongs to the purine/pyrimidine phosphoribosyltransferase family. PyrE subfamily. As to quaternary structure, homodimer. It depends on Mg(2+) as a cofactor.

It catalyses the reaction orotidine 5'-phosphate + diphosphate = orotate + 5-phospho-alpha-D-ribose 1-diphosphate. It functions in the pathway pyrimidine metabolism; UMP biosynthesis via de novo pathway; UMP from orotate: step 1/2. Functionally, catalyzes the transfer of a ribosyl phosphate group from 5-phosphoribose 1-diphosphate to orotate, leading to the formation of orotidine monophosphate (OMP). This is Orotate phosphoribosyltransferase from Rhodopseudomonas palustris (strain ATCC BAA-98 / CGA009).